A 184-amino-acid polypeptide reads, in one-letter code: Photosystem I assembly protein Ycf4 (184 aa).

Helical transmembrane passes span 21 to 43 and 68 to 90; these read NFCW…ISSY and FYGI…NVGS.

It belongs to the Ycf4 family.

The protein localises to the plastid. It localises to the chloroplast thylakoid membrane. Its function is as follows. Seems to be required for the assembly of the photosystem I complex. The sequence is that of Photosystem I assembly protein Ycf4 from Physcomitrium patens (Spreading-leaved earth moss).